Consider the following 86-residue polypeptide: Large ribosomal subunit protein bL27 (86 aa).

A disordered region spans residues 1–26 (MATKKAGGSSRNGRDSAGRRLGVKKS).

It belongs to the bacterial ribosomal protein bL27 family.

This Rickettsia prowazekii (strain Madrid E) protein is Large ribosomal subunit protein bL27.